Here is a 141-residue protein sequence, read N- to C-terminus: MSLDELRDRAALYALIAAGSVIGGCARYLVGVAQLSLLGTDFPWATLFVNVTGSFVIGFYAAIAGPDGRLFASSRQRQFVMTGICGGYTTFSGFSLETFQLLRTGHALAALINLGVSPMSWLVAVWLGHLVATRLNRLKGT.

The next 4 membrane-spanning stretches (helical) occupy residues 12–32 (LYAL…LVGV), 44–64 (WATL…AAIA), 79–99 (FVMT…LETF), and 107–127 (ALAA…AVWL). Gly86 and Thr89 together coordinate Na(+).

The protein belongs to the fluoride channel Fluc/FEX (TC 1.A.43) family.

It is found in the cell inner membrane. The catalysed reaction is fluoride(in) = fluoride(out). Its activity is regulated as follows. Na(+) is not transported, but it plays an essential structural role and its presence is essential for fluoride channel function. Functionally, fluoride-specific ion channel. Important for reducing fluoride concentration in the cell, thus reducing its toxicity. This chain is Fluoride-specific ion channel FluC 1, found in Rhodopseudomonas palustris (strain BisB18).